The chain runs to 109 residues: Probable endoribonuclease MazF5 (109 aa).

This sequence belongs to the PemK/MazF family. Forms a complex with cognate antitoxin MazE5.

Toxic component of a type II toxin-antitoxin (TA) system. Upon expression in M.smegmatis inhibits colony formation. Its toxic effect is neutralized by coexpression with cognate antitoxin MazE5. Probably an endoribonuclease. This is Probable endoribonuclease MazF5 (mazF5) from Mycobacterium tuberculosis (strain ATCC 25618 / H37Rv).